Consider the following 65-residue polypeptide: Large ribosomal subunit protein bL35 (65 aa).

The segment at 1–65 (MPKMKTNRAA…GRLDRMLPYL (65 aa)) is disordered. Over residues 10-44 (AAKRFRKTASGKYKAGHANRSHILTKKATKRKRNL) the composition is skewed to basic residues. The segment covering 50-65 (VRAEDAGRLDRMLPYL) has biased composition (basic and acidic residues).

Belongs to the bacterial ribosomal protein bL35 family.

This chain is Large ribosomal subunit protein bL35, found in Xylella fastidiosa (strain M12).